The primary structure comprises 736 residues: Poly(A) polymerase gamma (736 aa).

Lys2 carries the post-translational modification N6-acetyllysine. Phosphoserine occurs at positions 23 and 29. ATP-binding positions include 99–101, Thr108, 112–114, Asp166, Lys227, Tyr236, and 245–246; these read FGS, DID, and GV. Asp112, Asp114, and Asp166 together coordinate Mg(2+). The interval 506–564 is disordered; sequence KQSLSDVNRSSGGLQSKRLSLDSSCLDSSRDTDNGTPFNSPASKSDSPSVGETERNSAE. Positions 509-519 are enriched in polar residues; that stretch reads LSDVNRSSGGL. Residues 521 to 532 show a composition bias toward low complexity; it reads SKRLSLDSSCLD. At Ser525 the chain carries Phosphoserine. Over residues 539-555 the composition is skewed to polar residues; it reads NGTPFNSPASKSDSPSV. A phosphoserine mark is found at Ser599 and Ser648. Thr654 is modified (phosphothreonine). Residues 673–685 are compositionally biased toward basic and acidic residues; sequence DPRTAEERKRKSV. Residues 673-720 are disordered; sequence DPRTAEERKRKSVDAIGGESMPIPTIDTSRKKRLPSKELPDSSSPVPA. Residues Ser684 and Ser708 each carry the phosphoserine modification.

The protein belongs to the poly(A) polymerase family. Mg(2+) is required as a cofactor. It depends on Mn(2+) as a cofactor. Expressed predominantly in testis, and weakly in other tissues. Overexpressed in several tumors.

The protein resides in the nucleus. It catalyses the reaction RNA(n) + ATP = RNA(n)-3'-adenine ribonucleotide + diphosphate. Its function is as follows. Responsible for the post-transcriptional adenylation of the 3'-terminal of mRNA precursors and several small RNAs including signal recognition particle (SRP) RNA, nuclear 7SK RNA, U2 small nuclear RNA, and ribosomal 5S RNA. The sequence is that of Poly(A) polymerase gamma from Homo sapiens (Human).